The following is a 238-amino-acid chain: Beta-glucanase (238 aa).

Positions 1–26 are cleaved as a signal peptide; the sequence is MMKKKSWFTLMITGVISLFFSVSAFA. A GH16 domain is found at 29–238; the sequence is VFWEPLSYFN…EYDWVKYTSN (210 aa). Cysteines 56 and 85 form a disulfide. Glu-129 serves as the catalytic Nucleophile. Glu-133 acts as the Proton donor in catalysis.

The protein belongs to the glycosyl hydrolase 16 family.

The catalysed reaction is Hydrolysis of (1-&gt;4)-beta-D-glucosidic linkages in beta-D-glucans containing (1-&gt;3)- and (1-&gt;4)-bonds.. This chain is Beta-glucanase (gluB), found in Paenibacillus polymyxa (Bacillus polymyxa).